A 192-amino-acid chain; its full sequence is Phosphoheptose isomerase (192 aa).

In terms of domain architecture, SIS spans 37–192 (LADSFKAGGK…IQLIEKEMVK (156 aa)). 52–54 (NGG) contributes to the substrate binding site. Histidine 61 and glutamate 65 together coordinate Zn(2+). Residues glutamate 65, 93 to 94 (ND), 119 to 121 (STS), serine 124, and glutamine 172 contribute to the substrate site. The Zn(2+) site is built by glutamine 172 and histidine 180.

Belongs to the SIS family. GmhA subfamily. Homotetramer. Zn(2+) is required as a cofactor.

It is found in the cytoplasm. The catalysed reaction is 2 D-sedoheptulose 7-phosphate = D-glycero-alpha-D-manno-heptose 7-phosphate + D-glycero-beta-D-manno-heptose 7-phosphate. It functions in the pathway carbohydrate biosynthesis; D-glycero-D-manno-heptose 7-phosphate biosynthesis; D-glycero-alpha-D-manno-heptose 7-phosphate and D-glycero-beta-D-manno-heptose 7-phosphate from sedoheptulose 7-phosphate: step 1/1. Functionally, catalyzes the isomerization of sedoheptulose 7-phosphate in D-glycero-D-manno-heptose 7-phosphate. The chain is Phosphoheptose isomerase from Enterobacter sp. (strain 638).